The following is an 82-amino-acid chain: Small ribosomal subunit protein bS16 (82 aa).

The protein belongs to the bacterial ribosomal protein bS16 family.

The protein is Small ribosomal subunit protein bS16 of Clostridium botulinum (strain Okra / Type B1).